The primary structure comprises 249 residues: Small ribosomal subunit protein uS2 (249 aa).

This sequence belongs to the universal ribosomal protein uS2 family.

This is Small ribosomal subunit protein uS2 from Acinetobacter baylyi (strain ATCC 33305 / BD413 / ADP1).